We begin with the raw amino-acid sequence, 437 residues long: UDP-N-acetylmuramoylalanine--D-glutamate ligase (437 aa).

115 to 121 lines the ATP pocket; it reads GSNGKST.

It belongs to the MurCDEF family.

It is found in the cytoplasm. The enzyme catalyses UDP-N-acetyl-alpha-D-muramoyl-L-alanine + D-glutamate + ATP = UDP-N-acetyl-alpha-D-muramoyl-L-alanyl-D-glutamate + ADP + phosphate + H(+). It participates in cell wall biogenesis; peptidoglycan biosynthesis. Functionally, cell wall formation. Catalyzes the addition of glutamate to the nucleotide precursor UDP-N-acetylmuramoyl-L-alanine (UMA). This is UDP-N-acetylmuramoylalanine--D-glutamate ligase from Vibrio parahaemolyticus serotype O3:K6 (strain RIMD 2210633).